The following is a 159-amino-acid chain: Fatty acid-binding protein homolog 1 (159 aa).

A signal peptide spans 1–17; that stretch reads MCAKIALLLVLVGAASA.

It belongs to the calycin superfamily. Fatty-acid binding protein (FABP) family. In terms of tissue distribution, first detected in hypodermal precursor cells at the time of gastrulation. From the two-fold stage through to three-fold stages, expression is localized exclusively to hyp-7 but disappears in newly hatched L1s and subsequent developmental stages. Expression from L1 to adult stages is found in a single neuron in the ventral cord with a process into the nerve ring.

The protein resides in the secreted. May play a role in sequestering potentially toxic fatty acids and their peroxidation products, or it may be involved in the maintenance of the impermeable lipid layer of the eggshell. The protein is Fatty acid-binding protein homolog 1 (lbp-1) of Caenorhabditis elegans.